Reading from the N-terminus, the 145-residue chain is Large ribosomal subunit protein uL24 (145 aa).

Residues 108 to 145 (EPIQEEQQKTEETKQEIAPEEVEAKEAQDKQEVKENDQ) are disordered. Residues 113-145 (EQQKTEETKQEIAPEEVEAKEAQDKQEVKENDQ) show a composition bias toward basic and acidic residues.

The protein belongs to the universal ribosomal protein uL24 family. Part of the 50S ribosomal subunit.

Its function is as follows. One of two assembly initiator proteins, it binds directly to the 5'-end of the 23S rRNA, where it nucleates assembly of the 50S subunit. Located at the polypeptide exit tunnel on the outside of the subunit. The chain is Large ribosomal subunit protein uL24 (rpl24) from Thermoplasma volcanium (strain ATCC 51530 / DSM 4299 / JCM 9571 / NBRC 15438 / GSS1).